Here is a 546-residue protein sequence, read N- to C-terminus: Chaperonin GroEL 1 (546 aa).

ATP-binding positions include 29–32 (TLGP), 86–90 (DGTTT), G414, and D499.

The protein belongs to the chaperonin (HSP60) family. Forms a cylinder of 14 subunits composed of two heptameric rings stacked back-to-back. Interacts with the co-chaperonin GroES.

The protein localises to the cytoplasm. It catalyses the reaction ATP + H2O + a folded polypeptide = ADP + phosphate + an unfolded polypeptide.. Its function is as follows. Together with its co-chaperonin GroES, plays an essential role in assisting protein folding. The GroEL-GroES system forms a nano-cage that allows encapsulation of the non-native substrate proteins and provides a physical environment optimized to promote and accelerate protein folding. The protein is Chaperonin GroEL 1 of Roseiflexus sp. (strain RS-1).